Here is a 437-residue protein sequence, read N- to C-terminus: Phosphomethylpyrimidine synthase (437 aa).

Substrate contacts are provided by residues N69, M98, Y127, H163, 185 to 187, 226 to 229, and E265; these read SRG and DALR. H269 contacts Zn(2+). Y292 contributes to the substrate binding site. H333 contributes to the Zn(2+) binding site. The [4Fe-4S] cluster site is built by C409, C412, and C416.

Belongs to the ThiC family. The cofactor is [4Fe-4S] cluster.

The catalysed reaction is 5-amino-1-(5-phospho-beta-D-ribosyl)imidazole + S-adenosyl-L-methionine = 4-amino-2-methyl-5-(phosphooxymethyl)pyrimidine + CO + 5'-deoxyadenosine + formate + L-methionine + 3 H(+). It participates in cofactor biosynthesis; thiamine diphosphate biosynthesis. In terms of biological role, catalyzes the synthesis of the hydroxymethylpyrimidine phosphate (HMP-P) moiety of thiamine from aminoimidazole ribotide (AIR) in a radical S-adenosyl-L-methionine (SAM)-dependent reaction. The sequence is that of Phosphomethylpyrimidine synthase from Alkaliphilus oremlandii (strain OhILAs) (Clostridium oremlandii (strain OhILAs)).